Here is a 311-residue protein sequence, read N- to C-terminus: Urease accessory protein UreD (311 aa).

This sequence belongs to the UreD family. As to quaternary structure, ureD, UreF and UreG form a complex that acts as a GTP-hydrolysis-dependent molecular chaperone, activating the urease apoprotein by helping to assemble the nickel containing metallocenter of UreC. The UreE protein probably delivers the nickel.

It is found in the cytoplasm. Functionally, required for maturation of urease via the functional incorporation of the urease nickel metallocenter. This Parasynechococcus marenigrum (strain WH8102) protein is Urease accessory protein UreD.